The primary structure comprises 289 residues: Bifunctional protein FolD (289 aa).

NADP(+) contacts are provided by residues 166–168 and Ile-232; that span reads GVS.

The protein belongs to the tetrahydrofolate dehydrogenase/cyclohydrolase family. Homodimer.

It catalyses the reaction (6R)-5,10-methylene-5,6,7,8-tetrahydrofolate + NADP(+) = (6R)-5,10-methenyltetrahydrofolate + NADPH. The enzyme catalyses (6R)-5,10-methenyltetrahydrofolate + H2O = (6R)-10-formyltetrahydrofolate + H(+). The protein operates within one-carbon metabolism; tetrahydrofolate interconversion. Its function is as follows. Catalyzes the oxidation of 5,10-methylenetetrahydrofolate to 5,10-methenyltetrahydrofolate and then the hydrolysis of 5,10-methenyltetrahydrofolate to 10-formyltetrahydrofolate. This Methylobacillus flagellatus (strain ATCC 51484 / DSM 6875 / VKM B-1610 / KT) protein is Bifunctional protein FolD.